Reading from the N-terminus, the 97-residue chain is Na(+)/H(+) antiporter subunit F1 (97 aa).

3 helical membrane-spanning segments follow: residues 3-23 (HNVI…AMLI), 35-55 (VVAL…FSIL), and 60-80 (YMIV…AVFS).

Belongs to the CPA3 antiporters (TC 2.A.63) subunit F family. As to quaternary structure, may form a heterooligomeric complex that consists of seven subunits: mnhA1, mnhB1, mnhC1, mnhD1, mnhE1, mnhF1 and mnhG1.

It is found in the cell membrane. In terms of biological role, mnh complex is a Na(+)/H(+) antiporter involved in Na(+) excretion. In Staphylococcus aureus (strain Mu3 / ATCC 700698), this protein is Na(+)/H(+) antiporter subunit F1 (mnhF1).